Consider the following 317-residue polypeptide: D-aminoacyl-tRNA deacylase (317 aa).

It belongs to the DtdA deacylase family. It depends on Zn(2+) as a cofactor. In terms of tissue distribution, ubiquitous.

It is found in the nucleus. The protein localises to the cytoplasm. It catalyses the reaction a D-aminoacyl-tRNA + H2O = a tRNA + a D-alpha-amino acid + H(+). The catalysed reaction is glycyl-tRNA(Ala) + H2O = tRNA(Ala) + glycine + H(+). Hydrolyzes D-aminoacyl-tRNA into D-amino acid and free tRNA. Broad specificity toward the amino acid, but strict specificity toward the D-isomer. Seems to be required for ethanol tolerance. The protein is D-aminoacyl-tRNA deacylase (GEK1) of Arabidopsis thaliana (Mouse-ear cress).